The following is a 655-amino-acid chain: p-hydroxybenzoic acid efflux pump subunit AaeB (655 aa).

A run of 11 helical transmembrane segments spans residues 13 to 33 (FAVK…HFQL), 38 to 58 (WAVL…GGEP), 69 to 89 (LRII…ISMI), 93 to 113 (LLMI…SSLV), 121 to 141 (WGLS…EPLL), 152 to 172 (EIVI…PRSI), 370 to 390 (LFWL…IAVV), 407 to 427 (FIYG…VIIP), 431 to 451 (QSML…GIEV), 459 to 479 (MGAL…TFHF), and 482 to 502 (FLDS…VILL).

It belongs to the aromatic acid exporter ArAE (TC 2.A.85) family.

The protein localises to the cell inner membrane. Its function is as follows. Forms an efflux pump with AaeA. Could function as a metabolic relief valve, allowing to eliminate certain compounds when they accumulate to high levels in the cell. This is p-hydroxybenzoic acid efflux pump subunit AaeB from Salmonella enteritidis PT4 (strain P125109).